A 329-amino-acid polypeptide reads, in one-letter code: 4-hydroxythreonine-4-phosphate dehydrogenase (329 aa).

H136 and T137 together coordinate substrate. A divalent metal cation-binding residues include H166, H211, and H266. The substrate site is built by K274, N283, and R292.

The protein belongs to the PdxA family. As to quaternary structure, homodimer. Zn(2+) serves as cofactor. It depends on Mg(2+) as a cofactor. Requires Co(2+) as cofactor.

Its subcellular location is the cytoplasm. The enzyme catalyses 4-(phosphooxy)-L-threonine + NAD(+) = 3-amino-2-oxopropyl phosphate + CO2 + NADH. It participates in cofactor biosynthesis; pyridoxine 5'-phosphate biosynthesis; pyridoxine 5'-phosphate from D-erythrose 4-phosphate: step 4/5. Catalyzes the NAD(P)-dependent oxidation of 4-(phosphooxy)-L-threonine (HTP) into 2-amino-3-oxo-4-(phosphooxy)butyric acid which spontaneously decarboxylates to form 3-amino-2-oxopropyl phosphate (AHAP). The sequence is that of 4-hydroxythreonine-4-phosphate dehydrogenase from Shigella dysenteriae serotype 1 (strain Sd197).